Here is a 495-residue protein sequence, read N- to C-terminus: Flagellin (495 aa).

This sequence belongs to the bacterial flagellin family.

The protein resides in the secreted. Its subcellular location is the bacterial flagellum. Flagellin is the subunit protein which polymerizes to form the filaments of bacterial flagella. This chain is Flagellin (fliC), found in Salmonella paratyphi A (strain ATCC 9150 / SARB42).